The sequence spans 213 residues: Amelogenin, X isoform (213 aa).

An N-terminal signal peptide occupies residues M1 to S16. Phosphoserine is present on S32. 2 stretches are compositionally biased toward low complexity: residues V96–P105 and Q114–Q160. The tract at residues V96–D213 is disordered. Positions P161–P194 are enriched in pro residues.

Belongs to the amelogenin family. In terms of assembly, interacts with KRT5. Phosphorylated by FAM20C in vitro.

It is found in the secreted. It localises to the extracellular space. Its subcellular location is the extracellular matrix. In terms of biological role, plays a role in the biomineralization of teeth. Seems to regulate the formation of crystallites during the secretory stage of tooth enamel development. Thought to play a major role in the structural organization and mineralization of developing enamel. In Bos taurus (Bovine), this protein is Amelogenin, X isoform (AMELX).